Reading from the N-terminus, the 571-residue chain is E3 ubiquitin-protein ligase CHFR (571 aa).

A disordered region spans residues M1–R21. The 52-residue stretch at W38–V89 folds into the FHA domain. Residues E113 to F138 are disordered. At S152 the chain carries Phosphoserine. An RING-type zinc finger spans residues C212 to R251. T294 carries the post-translational modification Phosphothreonine. The interval M297–E325 is disordered. The segment covering D308–E325 has biased composition (acidic residues). The segment at P540–H562 adopts a PBZ-type zinc-finger fold.

Belongs to the CHFR family. Interacts with HDAC1 and HDAC2. Interacts with PML (with sumoylated form of PML). Poly-ADP-ribosylated. In addition to binding non covalently poly(ADP-ribose) via its PBZ-type zinc finger, the protein is also covalently poly-ADP-ribosylated by PARP1. In terms of processing, autoubiquitinated; may regulate its cellular level. Post-translationally, phosphorylated by PKB. Phosphorylation may affect its E3 ligase activity.

It is found in the nucleus. Its subcellular location is the PML body. It carries out the reaction S-ubiquitinyl-[E2 ubiquitin-conjugating enzyme]-L-cysteine + [acceptor protein]-L-lysine = [E2 ubiquitin-conjugating enzyme]-L-cysteine + N(6)-ubiquitinyl-[acceptor protein]-L-lysine.. It participates in protein modification; protein ubiquitination. Functionally, E3 ubiquitin-protein ligase that functions in the antephase checkpoint by actively delaying passage into mitosis in response to microtubule poisons. Acts in early prophase before chromosome condensation, when the centrosome move apart from each other along the periphery of the nucleus. Probably involved in signaling the presence of mitotic stress caused by microtubule poisons by mediating the 'Lys-48'-linked ubiquitination of target proteins, leading to their degradation by the proteasome. Promotes the ubiquitination and subsequent degradation of AURKA and PLK1. Probably acts as a tumor suppressor, possibly by mediating the polyubiquitination of HDAC1, leading to its degradation. May also promote the formation of 'Lys-63'-linked polyubiquitin chains and functions with the specific ubiquitin-conjugating UBC13-MMS2 (UBE2N-UBE2V2) heterodimer. Substrates that are polyubiquitinated at 'Lys-63' are usually not targeted for degradation, but are rather involved in signaling cellular stress. The polypeptide is E3 ubiquitin-protein ligase CHFR (CHFR) (Pongo abelii (Sumatran orangutan)).